The following is a 547-amino-acid chain: Chaperonin GroEL (547 aa).

ATP contacts are provided by residues 30–33, Lys-51, 87–91, Gly-415, and Asp-496; these read TLGP and DGTTT. The interval 527-547 is disordered; the sequence is SDKAEPMPMRGGMGGMGGMDF. A compositionally biased stretch (gly residues) spans 537 to 547; sequence GGMGGMGGMDF.

This sequence belongs to the chaperonin (HSP60) family. As to quaternary structure, forms a cylinder of 14 subunits composed of two heptameric rings stacked back-to-back. Interacts with the co-chaperonin GroES.

Its subcellular location is the cytoplasm. The enzyme catalyses ATP + H2O + a folded polypeptide = ADP + phosphate + an unfolded polypeptide.. Its function is as follows. Together with its co-chaperonin GroES, plays an essential role in assisting protein folding. The GroEL-GroES system forms a nano-cage that allows encapsulation of the non-native substrate proteins and provides a physical environment optimized to promote and accelerate protein folding. This Rickettsia africae (strain ESF-5) protein is Chaperonin GroEL.